We begin with the raw amino-acid sequence, 308 residues long: ADP-L-glycero-D-manno-heptose-6-epimerase (308 aa).

NADP(+)-binding positions include 10–11 (FI), 31–32 (DN), Lys38, Lys53, 75–79 (EGACS), and Asn92. Tyr139 acts as the Proton acceptor in catalysis. Lys143 is an NADP(+) binding site. Asn168 serves as a coordination point for substrate. The NADP(+) site is built by Val169 and Lys177. The active-site Proton acceptor is Lys177. Substrate is bound by residues Ser179, His186, 200–203 (FAGS), Arg208, and Tyr271.

Belongs to the NAD(P)-dependent epimerase/dehydratase family. HldD subfamily. In terms of assembly, homopentamer. It depends on NADP(+) as a cofactor.

The enzyme catalyses ADP-D-glycero-beta-D-manno-heptose = ADP-L-glycero-beta-D-manno-heptose. It participates in nucleotide-sugar biosynthesis; ADP-L-glycero-beta-D-manno-heptose biosynthesis; ADP-L-glycero-beta-D-manno-heptose from D-glycero-beta-D-manno-heptose 7-phosphate: step 4/4. Catalyzes the interconversion between ADP-D-glycero-beta-D-manno-heptose and ADP-L-glycero-beta-D-manno-heptose via an epimerization at carbon 6 of the heptose. The chain is ADP-L-glycero-D-manno-heptose-6-epimerase from Haemophilus influenzae (strain 86-028NP).